The sequence spans 209 residues: Thymidine kinase (209 aa).

Residues 9 to 16 (SAMNAGKT) and 88 to 91 (DEAQ) each bind ATP. Residue Glu89 is the Proton acceptor of the active site.

It belongs to the thymidine kinase family. As to quaternary structure, homotetramer.

The protein localises to the cytoplasm. The enzyme catalyses thymidine + ATP = dTMP + ADP + H(+). In Xanthomonas campestris pv. campestris (strain 8004), this protein is Thymidine kinase.